We begin with the raw amino-acid sequence, 345 residues long: Selenide, water dikinase (345 aa).

The active site involves cysteine 16. Residues lysine 19 and 46-48 (TSD) contribute to the ATP site. Residue aspartate 49 participates in Mg(2+) binding. ATP contacts are provided by residues aspartate 66, aspartate 89, and 136–138 (GHT). Mg(2+) is bound at residue aspartate 89. Aspartate 224 serves as a coordination point for Mg(2+).

It belongs to the selenophosphate synthase 1 family. Class I subfamily. In terms of assembly, homodimer. The cofactor is Mg(2+).

It catalyses the reaction hydrogenselenide + ATP + H2O = selenophosphate + AMP + phosphate + 2 H(+). In terms of biological role, synthesizes selenophosphate from selenide and ATP. The protein is Selenide, water dikinase of Clostridium botulinum (strain Eklund 17B / Type B).